We begin with the raw amino-acid sequence, 201 residues long: Small ribosomal subunit protein uS4 (201 aa).

The region spanning 91-157 (SRLDNVVYRA…VPFQIARETA (67 aa)) is the S4 RNA-binding domain.

The protein belongs to the universal ribosomal protein uS4 family. In terms of assembly, part of the 30S ribosomal subunit. Contacts protein S5. The interaction surface between S4 and S5 is involved in control of translational fidelity.

Its function is as follows. One of the primary rRNA binding proteins, it binds directly to 16S rRNA where it nucleates assembly of the body of the 30S subunit. With S5 and S12 plays an important role in translational accuracy. This chain is Small ribosomal subunit protein uS4, found in Mycolicibacterium paratuberculosis (strain ATCC BAA-968 / K-10) (Mycobacterium paratuberculosis).